Here is a 623-residue protein sequence, read N- to C-terminus: Stretch-activated cation channel MID1 (623 aa).

At 1-57 the chain is on the extracellular side; sequence MPAREVYLKRPATRRQLEGICTRYDGQQRITQLDCEEGCSKRTQPPQRLNPRYKSPD. Residues 58–78 form a helical membrane-spanning segment; sequence LIHISFIIVLLCILSMTSSVV. At 79 to 623 the chain is on the cytoplasmic side; it reads AQTTTGSSSS…DRWGNRWCNG (545 aa). The span at 524 to 536 shows a compositional bias: low complexity; the sequence is TSTSSGTFPTPST. Residues 524 to 544 form a disordered region; that stretch reads TSTSSGTFPTPSTVLRTPSSP. The interval 600–623 is required for targeting to the cell membrane; that stretch reads SYGDGSAAQGVAAQDRWGNRWCNG.

Forms an oligomer by disulfide bonds. Interacts with CCH1 to form a Ca(2+) influx channel. Interacts (via C-terminus) with CCP1/cytochrome c peroxidase; the interaction may contribute to cellular detoxification of radicals.

The protein resides in the cell membrane. Functionally, calcium-permeable, cation-selective stretch-activated channel (SAC) that functions together with CCH1 to mediate calcium entry into cells. May additionally play a role in cellular detoxification of radicals. The protein is Stretch-activated cation channel MID1 of Cryptococcus neoformans var. grubii serotype A (strain H99 / ATCC 208821 / CBS 10515 / FGSC 9487) (Filobasidiella neoformans var. grubii).